Consider the following 427-residue polypeptide: 3-phosphoshikimate 1-carboxyvinyltransferase (427 aa).

Residues lysine 22, serine 23, and arginine 27 each contribute to the 3-phosphoshikimate site. Position 22 (lysine 22) interacts with phosphoenolpyruvate. Phosphoenolpyruvate-binding residues include glycine 96 and arginine 124. 3-phosphoshikimate is bound by residues serine 169, serine 170, glutamine 171, serine 197, aspartate 313, asparagine 336, and lysine 340. Glutamine 171 is a binding site for phosphoenolpyruvate. Aspartate 313 serves as the catalytic Proton acceptor. Residues arginine 344, arginine 386, and lysine 411 each contribute to the phosphoenolpyruvate site.

It belongs to the EPSP synthase family. As to quaternary structure, monomer.

The protein resides in the cytoplasm. It carries out the reaction 3-phosphoshikimate + phosphoenolpyruvate = 5-O-(1-carboxyvinyl)-3-phosphoshikimate + phosphate. Its pathway is metabolic intermediate biosynthesis; chorismate biosynthesis; chorismate from D-erythrose 4-phosphate and phosphoenolpyruvate: step 6/7. Catalyzes the transfer of the enolpyruvyl moiety of phosphoenolpyruvate (PEP) to the 5-hydroxyl of shikimate-3-phosphate (S3P) to produce enolpyruvyl shikimate-3-phosphate and inorganic phosphate. The polypeptide is 3-phosphoshikimate 1-carboxyvinyltransferase (Salmonella schwarzengrund (strain CVM19633)).